Consider the following 426-residue polypeptide: Diaminobutyrate--2-oxoglutarate transaminase (426 aa).

Residue Lys272 is modified to N6-(pyridoxal phosphate)lysine.

The protein belongs to the class-III pyridoxal-phosphate-dependent aminotransferase family. Pyridoxal 5'-phosphate serves as cofactor.

It catalyses the reaction L-2,4-diaminobutanoate + 2-oxoglutarate = L-aspartate 4-semialdehyde + L-glutamate. It participates in amine and polyamine biosynthesis; ectoine biosynthesis; L-ectoine from L-aspartate 4-semialdehyde: step 1/3. Functionally, catalyzes reversively the conversion of L-aspartate beta-semialdehyde (ASA) to L-2,4-diaminobutyrate (DABA) by transamination with L-glutamate. In Sporosarcina pasteurii (Bacillus pasteurii), this protein is Diaminobutyrate--2-oxoglutarate transaminase (ectB).